Here is a 104-residue protein sequence, read N- to C-terminus: L-rhamnose mutarotase (104 aa).

Tyr18 is a binding site for substrate. The active-site Proton donor is His22. Substrate-binding positions include Tyr41 and 76–77 (WW).

The protein belongs to the rhamnose mutarotase family. Homodimer.

It is found in the cytoplasm. The enzyme catalyses alpha-L-rhamnose = beta-L-rhamnose. It participates in carbohydrate metabolism; L-rhamnose metabolism. Functionally, involved in the anomeric conversion of L-rhamnose. This Salmonella arizonae (strain ATCC BAA-731 / CDC346-86 / RSK2980) protein is L-rhamnose mutarotase.